Here is a 183-residue protein sequence, read N- to C-terminus: Putative manganese efflux pump MntP (183 aa).

The next 6 helical transmembrane spans lie at 3–23, 43–63, 66–86, 107–127, 134–154, and 161–181; these read TISV…LSIY, TFGI…ILFI, ISLY…LMML, LIIM…TFSI, FLYT…GFIL, and ILGQ…SINI.

Belongs to the MntP (TC 9.B.29) family.

It localises to the cell inner membrane. Functionally, probably functions as a manganese efflux pump. In Fusobacterium nucleatum subsp. nucleatum (strain ATCC 25586 / DSM 15643 / BCRC 10681 / CIP 101130 / JCM 8532 / KCTC 2640 / LMG 13131 / VPI 4355), this protein is Putative manganese efflux pump MntP.